Consider the following 295-residue polypeptide: MYKDIATPTRTKEILEKYGFSFKKSLGQNFLIEPNILHRIVDFAQLSERTGVIEIGPGIGALTEQLARRAKKVVAFEIDQRLLPILADTLSPYTNVSIIHEDILKADVQQVIAEQFTDVDDIMVVANLPYYVTTPIIMKLLTDRLPIRGMVVMLQKEVADRMAAKPGTKDYGSLTIAVQYYTHAETVMHVPRTVFVPKPNVDSAVIRLLKREQPAVSVSNEDFFFAVVRASFGQRRKTILNNLLNQLPNGKEKKEQIENALANAGIDPKRRGETLAIAEFATLSEQLYPIFYEEA.

Residues Asn-29, Leu-31, Gly-56, Glu-77, Asp-102, and Asn-127 each coordinate S-adenosyl-L-methionine.

Belongs to the class I-like SAM-binding methyltransferase superfamily. rRNA adenine N(6)-methyltransferase family. RsmA subfamily.

It is found in the cytoplasm. It carries out the reaction adenosine(1518)/adenosine(1519) in 16S rRNA + 4 S-adenosyl-L-methionine = N(6)-dimethyladenosine(1518)/N(6)-dimethyladenosine(1519) in 16S rRNA + 4 S-adenosyl-L-homocysteine + 4 H(+). Its function is as follows. Specifically dimethylates two adjacent adenosines (A1518 and A1519) in the loop of a conserved hairpin near the 3'-end of 16S rRNA in the 30S particle. May play a critical role in biogenesis of 30S subunits. The chain is Ribosomal RNA small subunit methyltransferase A from Anoxybacillus flavithermus (strain DSM 21510 / WK1).